Reading from the N-terminus, the 240-residue chain is LOB domain-containing protein 39 (240 aa).

In terms of domain architecture, LOB spans 1-107 (MSCNGCRVLR…VETVLRGGTL (107 aa)). Positions 200-233 (GDRPGSPSEESVTTSCWENGMRGDNKQKRNKGEK) are disordered. Polar residues predominate over residues 207-216 (SEESVTTSCW).

The protein belongs to the LOB domain-containing protein family. As to expression, expressed in young shoots, roots, stems, leaves and flowers.

This chain is LOB domain-containing protein 39 (LBD39), found in Arabidopsis thaliana (Mouse-ear cress).